Here is a 485-residue protein sequence, read N- to C-terminus: Glutamate--tRNA ligase (485 aa).

The 'HIGH' region signature appears at 11–21 (PSPTGLLHIGN). A 'KMSKS' region motif is present at residues 255 to 259 (KLSKR). Residue Lys-258 participates in ATP binding.

It belongs to the class-I aminoacyl-tRNA synthetase family. Glutamate--tRNA ligase type 1 subfamily. Monomer.

The protein localises to the cytoplasm. It carries out the reaction tRNA(Glu) + L-glutamate + ATP = L-glutamyl-tRNA(Glu) + AMP + diphosphate. In terms of biological role, catalyzes the attachment of glutamate to tRNA(Glu) in a two-step reaction: glutamate is first activated by ATP to form Glu-AMP and then transferred to the acceptor end of tRNA(Glu). This is Glutamate--tRNA ligase from Streptococcus gordonii (strain Challis / ATCC 35105 / BCRC 15272 / CH1 / DL1 / V288).